The sequence spans 589 residues: MDGEAVRFCTDNQCVSLHPQEVDSVAMAPAAPKIPRLVQATPAFMAVTLVFSLVTLFVVVQQQTRPVPKPVQAVILGDNITGHLPFEPNNHHHFGREAEMRELIQTFKGHMENSSAWVVEIQMLKCRVDNVNSQLQVLGDHLGNTNADIQMVKGVLKDATTLSLQTQMLRSSLEGTNAEIQRLKEDLEKADALTFQTLNFLKSSLENTSIELHVLSRGLENANSEIQMLNASLETANTQAQLANSSLKNANAEIYVLRGHLDSVNDLRTQNQVLRNSLEGANAEIQGLKENLQNTNALNSQTQAFIKSSFDNTSAEIQFLRGHLERAGDEIHVLKRDLKMVTAQTQKANGRLDQTDTQIQVFKSEMENVNTLNAQIQVLNGHMKNASREIQTLKQGMKNASALTSQTQMLDSNLQKASAEIQRLRGDLENTKALTMEIQQEQSRLKTLHVVITSQEQLQRTQSQLLQMVLQGWKFNGGSLYYFSSVKKSWHEAEQFCVSQGAHLASVASKEEQAFLVEFTSKVYYWIGLTDRGTEGSWRWTDGTPFNAAQNKAPGSKGSCPLRKYIIVNSGMGACSFIDTPPCPWILSN.

Residues 1 to 39 (MDGEAVRFCTDNQCVSLHPQEVDSVAMAPAAPKIPRLVQ) are Cytoplasmic-facing. Residues 40–60 (ATPAFMAVTLVFSLVTLFVVV) traverse the membrane as a helical; Signal-anchor for type II membrane protein segment. Residues 61–589 (QQQTRPVPKP…TPPCPWILSN (529 aa)) are Extracellular-facing. N-linked (GlcNAc...) asparagine glycosylation is found at N79, N113, N207, N230, N244, N312, N385, and N399. In terms of domain architecture, C-type lectin spans 476–589 (NGGSLYYFSS…TPPCPWILSN (114 aa)).

Its subcellular location is the membrane. Functionally, receptor with an affinity for galactose and fucose. Could be involved in endocytosis. The sequence is that of C-type lectin domain family 4 member F (CLEC4F) from Homo sapiens (Human).